Consider the following 185-residue polypeptide: Alcohol dehydrogenase 1 (185 aa).

Residues 10–15 (GLGGVG), D34, K39, 103–105 (VGV), and R180 each bind NAD(+).

The protein belongs to the zinc-containing alcohol dehydrogenase family. Class-I subfamily. In terms of assembly, homodimer. Requires Zn(2+) as cofactor.

The protein resides in the cytoplasm. The enzyme catalyses a primary alcohol + NAD(+) = an aldehyde + NADH + H(+). It catalyses the reaction a secondary alcohol + NAD(+) = a ketone + NADH + H(+). The protein is Alcohol dehydrogenase 1 (ADH1) of Anas platyrhynchos (Mallard).